We begin with the raw amino-acid sequence, 643 residues long: Hepatoma-derived growth factor-related protein 2 (643 aa).

One can recognise a PWWP domain in the interval 7–64 (PGDLVFAKMKGYPHWPARIDDVKDGAVKPPPNKYPIFFYGTHETAFLAPKDLFPYEKC). 2 disordered regions span residues 88–450 (PQAS…KKPE) and 548–643 (LESQ…NQTS). The span at 90–104 (ASYSLPPASVSSSDS) shows a compositional bias: low complexity. The segment covering 107–116 (PEEKSTARSD) has biased composition (basic and acidic residues). The segment covering 176-187 (SEEENSDSDQDF) has biased composition (acidic residues). Positions 194–204 (PRIQRRTTNLG) are enriched in polar residues. Residues 209–231 (IFAESDSKSDESEDEKKEEEQKK) show a composition bias toward basic and acidic residues. Positions 232 to 249 (SPSSSSASSPSLSSSDSE) are enriched in low complexity. Basic and acidic residues-rich tracts occupy residues 290–353 (SVDR…DSSK), 373–382 (EDKKPVKEVK), and 417–450 (RPSESARKTNQKEKRGERPRGRPSKVEKEKKKPE). Residues 295 to 345 (SEWKKRDEERRRELEERRKKEQEEQLRRLREEEREEEERKKREKAEKGDKS) adopt a coiled-coil conformation. Polar residues predominate over residues 549–559 (ESQQKTVQKVN). 2 stretches are compositionally biased toward basic and acidic residues: residues 560–575 (TAEKDPEEEKQTGKVE) and 608–622 (NKTEMETKQNNHAEH).

Belongs to the HDGF family.

It is found in the nucleus. It localises to the cytoplasm. Its function is as follows. May act as a regulator of myogenesis. Promotes the repair of DNA double-strand breaks (DSBs) through the homologous recombination pathway by facilitating the recruitment of the DNA endonuclease RBBP8 to the DSBs. The sequence is that of Hepatoma-derived growth factor-related protein 2 (hdgfl2) from Xenopus tropicalis (Western clawed frog).